A 94-amino-acid polypeptide reads, in one-letter code: MSRSVKKPPFCAPHVLRLANRVIASNRTSVVINIHSRSSVILNKFVGLTFGVYNGKTYVPVKVTDNIVGRKFGEFSPTRRFLGHAGDKKVSRKG.

Belongs to the universal ribosomal protein uS19 family.

Its function is as follows. Protein S19 forms a complex with S13 that binds strongly to the 16S ribosomal RNA. This Anaplasma phagocytophilum (strain HZ) protein is Small ribosomal subunit protein uS19.